We begin with the raw amino-acid sequence, 241 residues long: ATP synthase subunit a (241 aa).

The next 5 membrane-spanning stretches (helical) occupy residues 30-50, 91-111, 128-148, 193-213, and 214-234; these read GQVF…ISVG, FIGT…LIPW, INTT…AGLS, LVVG…VMFL, and GLFT…YYIG.

It belongs to the ATPase A chain family. As to quaternary structure, F-type ATPases have 2 components, CF(1) - the catalytic core - and CF(0) - the membrane proton channel. CF(1) has five subunits: alpha(3), beta(3), gamma(1), delta(1), epsilon(1). CF(0) has four main subunits: a, b, b' and c.

Its subcellular location is the cellular thylakoid membrane. In terms of biological role, key component of the proton channel; it plays a direct role in the translocation of protons across the membrane. This Prochlorococcus marinus subsp. pastoris (strain CCMP1986 / NIES-2087 / MED4) protein is ATP synthase subunit a.